The following is a 443-amino-acid chain: Thymidine phosphorylase (443 aa).

Belongs to the thymidine/pyrimidine-nucleoside phosphorylase family. In terms of assembly, homodimer.

The catalysed reaction is thymidine + phosphate = 2-deoxy-alpha-D-ribose 1-phosphate + thymine. Its pathway is pyrimidine metabolism; dTMP biosynthesis via salvage pathway; dTMP from thymine: step 1/2. In terms of biological role, the enzymes which catalyze the reversible phosphorolysis of pyrimidine nucleosides are involved in the degradation of these compounds and in their utilization as carbon and energy sources, or in the rescue of pyrimidine bases for nucleotide synthesis. In Shewanella sp. (strain MR-4), this protein is Thymidine phosphorylase.